Here is a 300-residue protein sequence, read N- to C-terminus: Protein XRI1 (300 aa).

Interacts (via C-terminal domain) with MIP1.

The protein resides in the nucleus. Required for mitotic division of the generative cell nucleus and the development of mature tricellular pollen grains, and for male and female meiosis. This chain is Protein XRI1 (XRI1), found in Arabidopsis thaliana (Mouse-ear cress).